Reading from the N-terminus, the 295-residue chain is MIYFHDIDPIALSLGPIKVHWYGIMYLLGFTAAWLLGRKRIADGRLPGVDANGFSDLLFYAMLGVVLGGRIGYMLFYALGDFLHNPLLLFKVWDGGMSFHGGLLGVIAACWWWSRKHKLHFFDTMDFMAPLVPLGLGFGRIGNFIGAELWGKYTDGSWGVVFPSGLPAPLNQLDHATLQAQFATGALNQFARHPSQLYEALLEGLVMFVVLWAVSAKPRHRYLVGGLFALMYGLFRFAVEFVRMPDNGVYVAFDWLTRGQILSLPLIAFGLVLLVMSRRAPVLQPQLPVAAEGKA.

Helical transmembrane passes span 17–37, 57–77, 92–112, 127–147, 196–216, 222–242, and 255–275; these read IKVH…WLLG, LLFY…MLFY, VWDG…ACWW, FMAP…FIGA, QLYE…AVSA, YLVG…VEFV, and WLTR…VLLV. Arginine 140 is a binding site for a 1,2-diacyl-sn-glycero-3-phospho-(1'-sn-glycerol).

It belongs to the Lgt family.

The protein resides in the cell inner membrane. It catalyses the reaction L-cysteinyl-[prolipoprotein] + a 1,2-diacyl-sn-glycero-3-phospho-(1'-sn-glycerol) = an S-1,2-diacyl-sn-glyceryl-L-cysteinyl-[prolipoprotein] + sn-glycerol 1-phosphate + H(+). It participates in protein modification; lipoprotein biosynthesis (diacylglyceryl transfer). Functionally, catalyzes the transfer of the diacylglyceryl group from phosphatidylglycerol to the sulfhydryl group of the N-terminal cysteine of a prolipoprotein, the first step in the formation of mature lipoproteins. This chain is Phosphatidylglycerol--prolipoprotein diacylglyceryl transferase, found in Stenotrophomonas maltophilia (strain R551-3).